Reading from the N-terminus, the 316-residue chain is Putative S-adenosyl-L-methionine-dependent methyltransferase MAB_4606c (316 aa).

S-adenosyl-L-methionine is bound by residues D137 and 166–167 (DL).

It belongs to the UPF0677 family.

Functionally, exhibits S-adenosyl-L-methionine-dependent methyltransferase activity. The protein is Putative S-adenosyl-L-methionine-dependent methyltransferase MAB_4606c of Mycobacteroides abscessus (strain ATCC 19977 / DSM 44196 / CCUG 20993 / CIP 104536 / JCM 13569 / NCTC 13031 / TMC 1543 / L948) (Mycobacterium abscessus).